A 434-amino-acid polypeptide reads, in one-letter code: Adenylosuccinate synthetase (434 aa).

GTP contacts are provided by residues 12–18 (GDEGKGK) and 40–42 (GHT). The active-site Proton acceptor is D13. Residues D13 and G40 each coordinate Mg(2+). Residues 13–16 (DEGK), 38–41 (NAGH), T129, R143, Q224, T239, and R303 each bind IMP. The active-site Proton donor is the H41. 299-305 (AVTGRPR) is a binding site for substrate. GTP is bound by residues R305, 331-333 (KLD), and 413-415 (STG).

Belongs to the adenylosuccinate synthetase family. Homodimer. Mg(2+) serves as cofactor.

The protein resides in the cytoplasm. The catalysed reaction is IMP + L-aspartate + GTP = N(6)-(1,2-dicarboxyethyl)-AMP + GDP + phosphate + 2 H(+). Its pathway is purine metabolism; AMP biosynthesis via de novo pathway; AMP from IMP: step 1/2. Functionally, plays an important role in the de novo pathway of purine nucleotide biosynthesis. Catalyzes the first committed step in the biosynthesis of AMP from IMP. In Solibacter usitatus (strain Ellin6076), this protein is Adenylosuccinate synthetase.